Here is a 224-residue protein sequence, read N- to C-terminus: Ribose-5-phosphate isomerase A (224 aa).

Substrate-binding positions include 34 to 37 (TGST), 87 to 90 (DGAD), and 100 to 103 (KGGG). The Proton acceptor role is filled by Glu-109. Position 127 (Lys-127) interacts with substrate.

The protein belongs to the ribose 5-phosphate isomerase family. As to quaternary structure, homodimer.

It carries out the reaction aldehydo-D-ribose 5-phosphate = D-ribulose 5-phosphate. It participates in carbohydrate degradation; pentose phosphate pathway; D-ribose 5-phosphate from D-ribulose 5-phosphate (non-oxidative stage): step 1/1. Its function is as follows. Catalyzes the reversible conversion of ribose-5-phosphate to ribulose 5-phosphate. In Francisella tularensis subsp. tularensis (strain FSC 198), this protein is Ribose-5-phosphate isomerase A.